A 686-amino-acid chain; its full sequence is Pollen receptor-like kinase 5 (686 aa).

The N-terminal stretch at 1–39 is a signal peptide; it reads MRNWEDPFTLACNTALKKNLPSCIFIIIFISVLCPVAMS. Residues 40–283 lie on the Extracellular side of the membrane; sequence QVVVPDSDAD…GKKAGSFYTL (244 aa). Residue Asn-60 is glycosylated (N-linked (GlcNAc...) asparagine). LRR repeat units lie at residues 112–135, 136–159, 161–184, 185–208, and 210–230; these read MKNL…VKRF, TSLK…AFLG, PLLK…LASL, PMLL…QQKD, and KLAS…LRNM. The helical transmembrane segment at 284–304 threads the bilayer; it reads AIILIVIGIILVIIALVFCFV. Residues 305 to 686 are Cytoplasmic-facing; sequence QSRRRNFLSA…DDDFGFSMNR (382 aa). The span at 328 to 339 shows a compositional bias: polar residues; it reads NYHQSTNKNNKP. Positions 328-355 are disordered; sequence NYHQSTNKNNKPAESVNHTRRGSMPDPG. The Protein kinase domain maps to 375 to 648; the sequence is RASAEVLGSG…REVVEMVEML (274 aa). Ser-377 carries the post-translational modification Phosphoserine. ATP is bound by residues 381-389 and Lys-403; that span reads LGSGTFGAS. A phosphoserine mark is found at Ser-455 and Ser-458. At Thr-472 the chain carries Phosphothreonine. Tyr-542 is subject to Phosphotyrosine. Phosphoserine is present on Ser-545.

It belongs to the protein kinase superfamily. Ser/Thr protein kinase family. In terms of assembly, interacts with the GRI peptide. As to expression, expressed in pollen and/or in flowers. Detected at low levels in leaves.

The protein resides in the cell membrane. It catalyses the reaction L-seryl-[protein] + ATP = O-phospho-L-seryl-[protein] + ADP + H(+). The enzyme catalyses L-threonyl-[protein] + ATP = O-phospho-L-threonyl-[protein] + ADP + H(+). In terms of biological role, receptor-like kinase involved in the control of pollen germination and pollen tube polar growth. The extracellular domain serves as a sensor for peptides derived from GRI. May act as a downstream element for ROS-dependent cell death induced by GRI. The protein is Pollen receptor-like kinase 5 of Arabidopsis thaliana (Mouse-ear cress).